The chain runs to 258 residues: Tryptophan synthase alpha chain (258 aa).

Residues E52 and D63 each act as proton acceptor in the active site.

The protein belongs to the TrpA family. Tetramer of two alpha and two beta chains.

The catalysed reaction is (1S,2R)-1-C-(indol-3-yl)glycerol 3-phosphate + L-serine = D-glyceraldehyde 3-phosphate + L-tryptophan + H2O. It functions in the pathway amino-acid biosynthesis; L-tryptophan biosynthesis; L-tryptophan from chorismate: step 5/5. Functionally, the alpha subunit is responsible for the aldol cleavage of indoleglycerol phosphate to indole and glyceraldehyde 3-phosphate. This chain is Tryptophan synthase alpha chain, found in Streptococcus pneumoniae (strain 70585).